Here is a 183-residue protein sequence, read N- to C-terminus: Probable GTP-binding protein EngB (183 aa).

The EngB-type G domain occupies aspartate 18 to leucine 183. Residues glycine 26 to serine 33, glycine 52 to leucine 56, aspartate 70 to glycine 73, threonine 137 to aspartate 140, and valine 166 to serine 168 contribute to the GTP site. Mg(2+)-binding residues include serine 33 and threonine 54.

Belongs to the TRAFAC class TrmE-Era-EngA-EngB-Septin-like GTPase superfamily. EngB GTPase family. Mg(2+) is required as a cofactor.

Its function is as follows. Necessary for normal cell division and for the maintenance of normal septation. This chain is Probable GTP-binding protein EngB, found in Metamycoplasma arthritidis (strain 158L3-1) (Mycoplasma arthritidis).